The chain runs to 183 residues: MILGDRDLKYYLEKGWIKIDPLREDTVRENGVDLRVGGEIARFIKTDKVFDPDNPDPAFFKIEKIEEFIIQPYEHVLLTTEEYIELPNDVMAFVNLRSSFARLGLFIPPTIVDAGFKGQITIEVVGSSFPVLLRRGTRFIHLIFARTLSPVEHPYQGKYQGQKGVTLPKFRTEASKFLSLHQK.

Residues 97-102 (RSSFAR) and D113 contribute to the dCTP site. E123 serves as the catalytic Proton donor/acceptor. 2 residues coordinate dCTP: Y155 and Q162.

Belongs to the dCTP deaminase family. In terms of assembly, homotrimer.

It catalyses the reaction dCTP + H2O + H(+) = dUTP + NH4(+). The protein operates within pyrimidine metabolism; dUMP biosynthesis; dUMP from dCTP (dUTP route): step 1/2. Catalyzes the deamination of dCTP to dUTP. This chain is dCTP deaminase, found in Sulfurisphaera tokodaii (strain DSM 16993 / JCM 10545 / NBRC 100140 / 7) (Sulfolobus tokodaii).